The primary structure comprises 793 residues: MALSPWTPGLGAGEKLVQAAAVSTGPSLELCTLPSTLGSSVAVEALEQLFVVEQSLQSDYFKCNEEAKIFLKDIAVAVKKLEEMRKATIDLLEIESMELNKLYYLLETLPNSIKRELEECVRDARRLNLFEINTIKMRITRTENEIELLKKKITDLTKYNEALGEKQEELARKHARFVLSLNQTMEKKATTTVYINETYTKINLKREDIALQKKCIQEAEELMEKERAEYLIRKQELTAQINEFENTREVKRMETYQKKKELDKLQTKMSKIKETVTVSAAVLSDHNLEIARLHESIRYWEQEVSELKKDLAILEAKLCFFTDNKEKLDDISNDEKNEFLNKIKQLVETLHAARMEYKDLREKMKTLARQYKIVLSEEEKAFLQKQKIHDENQKQLTFISQKEYFLSQKRVDIKNMEEGLITLQELQQATKTVYQQQIKILSANLERESQRCVITQWKMACLRKKHARWTAKIKAEIQAITEKIQNAEVRRIELLNETSFRQQEISGFVAQIEKLTTELKEEEKAFVNKEKMLMKELSKYEEIFVKETQINKEKEEELVEYLPQLQVAEQEYKEKRRKLEELSNIITAQRQEEDLLNNHIFLFTRDFSRYISNMEDVKQELQQLRDQESKKNKDHFETLKNLENGFYINDQKADLLLLENKKLKEYILYLKNNIEKYREGQEALMHTSSDLSRQLIAQEAQYKDLWAEFQTTVKILVDNGEETLQDINNLTDKLRERDEKMQHVSTWLRGSLEGLRLLVEQESPMDLLKKKKHIRTRVHFPVVKCTEKNTLTK.

5 coiled-coil regions span residues 131 to 163, 205 to 377, 431 to 535, 562 to 679, and 716 to 745; these read EINT…NEAL, KRED…VLSE, KTVY…MLMK, LPQL…KYRE, and LVDN…QHVS.

This Homo sapiens (Human) protein is Coiled-coil domain-containing protein 175 (CCDC175).